Reading from the N-terminus, the 930-residue chain is MPQEEVHDTSSVSDDNLTNTGGGGSNYYNSHNQPNVFVRAIRSIFGYRKTSLTLFVILTIIFTIALSLYDNNLDLTIELPTNKLENEILKSSWLDLQNIARYPHTYGSRANDRVHDYLESRIHDIIKENPYTEYNNDGEKVLYESAKSIVSYYESNNLLVRINGSDASLPALLLSAHYDSVPSSFGVTDDGMGIASLLGVLRFFAQNEQPRRTVIFNFNNDEEFGLYGAQAFVSHPWFKQIGFFLNLEGTGAGGKAILFRGTDYGIVKYFNKVRYPYATSIFQQGFNNHLIHSETDYKVYKEAGLRGLDLAFYKPRDIYHTAEDNIKNINLKSLWHMLSNSIDFANFVSNQKINDSGKDEFAVYTSFLGYFFSSPISALVTINSVLIVLFPILSGPLLFITVRYKKWKIGTSNFLSLPLAIVLTVAIVMIVVNQGFQIANPFLPSSHPLLLVATTTSISLLIYYVFLNGVNWVSPSGDQKLITIIEISFIYWLILIYVTHGLSQNKIGDDHTGEFPFTVLFFLEATASLFGLIGWTFSRSIKQSSNDGSDEPLLTGTAERYGSDDTDEDEQEEFRHHDGNTVKHLMQHFGYDWSLQYLLIVPISSLIIFNSGWLVLDGINKSIQESFAAENLIYLLIQLFSQFWILPILPFVYKLNRFIVFGLTIFAISGVALISFLDPFNQENPLKLRFIQKVDLNKSQDSFVEVYGRKGIFSDILSDMPSVKETHTKVECEALSDGLEACSYKSALAPNVIPGKSLKDYVNVEIVNSSKIESYGLLSGEIIITAPENRMCTLYFTKKKVKAVVIYNKSKSVNNFKSIPDGFSRDSKGNYIYKDVAGIDQLVLNKLDWNKNYHIGFDWLPNIDDEVNTLSVDVECYWADLAPGIGGGDNATNAELAIPAYNELVHYSPNWVTWANREKGLVSVSLKIEV.

Residues 1-28 (MPQEEVHDTSSVSDDNLTNTGGGGSNYY) form a disordered region. The Cytoplasmic segment spans residues 1-49 (MPQEEVHDTSSVSDDNLTNTGGGGSNYYNSHNQPNVFVRAIRSIFGYRK). A helical membrane pass occupies residues 50–70 (TSLTLFVILTIIFTIALSLYD). The Vacuolar segment spans residues 71–379 (NNLDLTIELP…YFFSSPISAL (309 aa)). N-linked (GlcNAc...) asparagine glycosylation occurs at asparagine 163. Residues histidine 177 and aspartate 189 each contribute to the Zn(2+) site. The active-site Proton acceptor is the glutamate 222. The Zn(2+) site is built by glutamate 223, glutamate 248, and histidine 320. Residue asparagine 354 is glycosylated (N-linked (GlcNAc...) asparagine). A helical transmembrane segment spans residues 380–400 (VTINSVLIVLFPILSGPLLFI). The Cytoplasmic portion of the chain corresponds to 401–411 (TVRYKKWKIGT). The chain crosses the membrane as a helical span at residues 412–432 (SNFLSLPLAIVLTVAIVMIVV). Topologically, residues 433–449 (NQGFQIANPFLPSSHPL) are vacuolar. A helical transmembrane segment spans residues 450–470 (LLVATTTSISLLIYYVFLNGV). The Cytoplasmic segment spans residues 471–480 (NWVSPSGDQK). Residues 481 to 501 (LITIIEISFIYWLILIYVTHG) traverse the membrane as a helical segment. Residues 502–514 (LSQNKIGDDHTGE) are Vacuolar-facing. Residues 515 to 535 (FPFTVLFFLEATASLFGLIGW) traverse the membrane as a helical segment. The Cytoplasmic segment spans residues 536–598 (TFSRSIKQSS…FGYDWSLQYL (63 aa)). Positions 542 to 570 (KQSSNDGSDEPLLTGTAERYGSDDTDEDE) are disordered. A helical transmembrane segment spans residues 599–619 (LIVPISSLIIFNSGWLVLDGI). N-linked (GlcNAc...) asparagine glycosylation is present at asparagine 620. The Vacuolar portion of the chain corresponds to 620 to 631 (NKSIQESFAAEN). The helical transmembrane segment at 632–652 (LIYLLIQLFSQFWILPILPFV) threads the bilayer. Residues 653–657 (YKLNR) are Cytoplasmic-facing. The chain crosses the membrane as a helical span at residues 658 to 678 (FIVFGLTIFAISGVALISFLD). Topologically, residues 679-930 (PFNQENPLKL…LVSVSLKIEV (252 aa)) are vacuolar. N-linked (GlcNAc...) asparagine glycosylation is found at asparagine 697, asparagine 768, asparagine 808, and asparagine 890.

Belongs to the peptidase M28 family. Zn(2+) serves as cofactor.

The protein resides in the vacuole membrane. Functionally, may be involved in vacuolar sorting and osmoregulation. The sequence is that of Vacuolar membrane protease from Candida dubliniensis (strain CD36 / ATCC MYA-646 / CBS 7987 / NCPF 3949 / NRRL Y-17841) (Yeast).